The chain runs to 352 residues: Biotin synthase (352 aa).

Residues 44–262 (NRVQVSTLLS…LAVARILMPK (219 aa)) form the Radical SAM core domain. 3 residues coordinate [4Fe-4S] cluster: Cys59, Cys63, and Cys66. Cys103, Cys134, Cys194, and Arg266 together coordinate [2Fe-2S] cluster.

This sequence belongs to the radical SAM superfamily. Biotin synthase family. As to quaternary structure, homodimer. The cofactor is [4Fe-4S] cluster. Requires [2Fe-2S] cluster as cofactor.

The catalysed reaction is (4R,5S)-dethiobiotin + (sulfur carrier)-SH + 2 reduced [2Fe-2S]-[ferredoxin] + 2 S-adenosyl-L-methionine = (sulfur carrier)-H + biotin + 2 5'-deoxyadenosine + 2 L-methionine + 2 oxidized [2Fe-2S]-[ferredoxin]. It functions in the pathway cofactor biosynthesis; biotin biosynthesis; biotin from 7,8-diaminononanoate: step 2/2. Functionally, catalyzes the conversion of dethiobiotin (DTB) to biotin by the insertion of a sulfur atom into dethiobiotin via a radical-based mechanism. This Pseudomonas putida (strain GB-1) protein is Biotin synthase.